Consider the following 95-residue polypeptide: Envelope glycoprotein N (95 aa).

An N-terminal signal peptide occupies residues 1–26 (MGLMDIHNAVCSLVIGVAILIATSQA). The Virion surface segment spans residues 27-55 (TFVDWGSSITSMGDFWESTCSAVGVSIAF). Residues 56–76 (SSGFSVLFYMGLVAVISALLA) form a helical membrane-spanning segment. Topologically, residues 77–95 (GSYHACFRLFTADMFKEEW) are intravirion.

It belongs to the herpesviridae glycoprotein N family. In terms of assembly, interacts (via N-terminus) with gM (via N-terminus). The gM-gN heterodimer forms the gCII complex.

Its subcellular location is the virion membrane. The protein localises to the host membrane. The protein resides in the host Golgi apparatus. It is found in the host trans-Golgi network. Envelope glycoprotein necessary for proper maturation of gM and modulation of its membrane fusion activity. Also plays a critical role in virion morphogenesis. This chain is Envelope glycoprotein N, found in Gallus gallus (Chicken).